We begin with the raw amino-acid sequence, 130 residues long: Small ribosomal subunit protein uS8 (130 aa).

This sequence belongs to the universal ribosomal protein uS8 family.

The sequence is that of Small ribosomal subunit protein uS8 (RPS22A) from Eremothecium gossypii (strain ATCC 10895 / CBS 109.51 / FGSC 9923 / NRRL Y-1056) (Yeast).